The chain runs to 124 residues: Single-stranded DNA-binding protein (124 aa).

This sequence belongs to the phi29likevirus single-strand-binding protein family. Monomer.

In terms of biological role, single-stranded DNA binding protein required for the elongation during viral DNA replication by strand displacement. Displaced viral DNA strands are transiently coated with the ssDNA-binding protein and therefore protected against nucleases. The latter is then probably removed by the replisome that performs lagging strand synthesis or during the events that lead up to the recombination process. Stimulates in vitro DNA replication several fold. Has helix-destabilizing activity since it removes secondary structure from the ssDNA in replicative intermediates. In Bacillus subtilis (Bacteriophage phi-29), this protein is Single-stranded DNA-binding protein (5).